We begin with the raw amino-acid sequence, 940 residues long: Isoleucine--tRNA ligase (940 aa).

Residues 58–68 (PYANGSIHIGH) carry the 'HIGH' region motif. Residue glutamate 564 participates in L-isoleucyl-5'-AMP binding. Residues 605–609 (KMSKS) carry the 'KMSKS' region motif. Lysine 608 lines the ATP pocket. Zn(2+) contacts are provided by cysteine 903, cysteine 906, cysteine 923, and cysteine 926.

Belongs to the class-I aminoacyl-tRNA synthetase family. IleS type 1 subfamily. As to quaternary structure, monomer. Requires Zn(2+) as cofactor.

It is found in the cytoplasm. The enzyme catalyses tRNA(Ile) + L-isoleucine + ATP = L-isoleucyl-tRNA(Ile) + AMP + diphosphate. Functionally, catalyzes the attachment of isoleucine to tRNA(Ile). As IleRS can inadvertently accommodate and process structurally similar amino acids such as valine, to avoid such errors it has two additional distinct tRNA(Ile)-dependent editing activities. One activity is designated as 'pretransfer' editing and involves the hydrolysis of activated Val-AMP. The other activity is designated 'posttransfer' editing and involves deacylation of mischarged Val-tRNA(Ile). This Shewanella sp. (strain ANA-3) protein is Isoleucine--tRNA ligase.